The sequence spans 1692 residues: Fatty acid synthase alpha subunit hexA (1692 aa).

The disordered stretch occupies residues 44-80; it reads AVEEPVDETPAPETAPERPPLSRAKTAAVKPQETAAP. In terms of domain architecture, Carrier spans 90-174; sequence LSAEEIVRAL…RVSSALLSKL (85 aa). Ser125 bears the O-(pantetheine 4'-phosphoryl)serine mark. The segment at 508–746 is ketoreductase (KR) domain; the sequence is FAGKNILITG…IAMLMTPELV (239 aa). A Ketosynthase family 3 (KS3) domain is found at 948–1430; the sequence is KEYLHEVAVE…QKGGQVVGVA (483 aa). The active-site For beta-ketoacyl synthase activity is the Cys1135. The disordered stretch occupies residues 1263-1287; that stretch reads GQAQLDKSSPSTNTTSRTSSVSLAR. Low complexity predominate over residues 1270-1284; sequence SSPSTNTTSRTSSVS. Catalysis depends on for beta-ketoacyl synthase activity residues His1315 and His1356. Residue Asp1569 coordinates Mg(2+). Acetyl-CoA contacts are provided by residues 1569-1571, 1615-1625, 1639-1642, and 1668-1670; these read DLV, EAVFKCLHTQT, KSDN, and ISH. Ser1669 provides a ligand contact to Mg(2+).

Belongs to the thiolase-like superfamily. Fungal fatty acid synthetase subunit alpha family. [Alpha(6)beta(6)] hexamers of two multifunctional subunits (alpha and beta). Post-translationally, 4'-phosphopantetheine is transferred from CoA to a specific serine of the acyl carrier domain by the C-terminal PPT domain. This modification is essential for activity because fatty acids are bound in thioester linkage to the sulfhydryl of the prosthetic group.

It catalyses the reaction acetyl-CoA + n malonyl-CoA + 2n NADPH + 4n H(+) = a long-chain-acyl-CoA + n CoA + n CO2 + 2n NADP(+).. The enzyme catalyses a fatty acyl-[ACP] + malonyl-[ACP] + H(+) = a 3-oxoacyl-[ACP] + holo-[ACP] + CO2. The catalysed reaction is a (3R)-hydroxyacyl-[ACP] + NADP(+) = a 3-oxoacyl-[ACP] + NADPH + H(+). It participates in mycotoxin biosynthesis. Fatty acid synthase alpha subunit; part of the fragmented gene cluster that mediates the biosynthesis of dothistromin (DOTH), a polyketide toxin very similar in structure to the aflatoxin precursor, versicolorin B. The first step of the pathway is the conversion of acetate to norsolorinic acid (NOR) and requires the fatty acid synthase subunits hexA and hexB, as well as the polyketide synthase pksA. PksA combines a hexanoyl starter unit and 7 malonyl-CoA extender units to synthesize the precursor NOR. The hexanoyl starter unit is provided to the acyl-carrier protein (ACP) domain by the fungal fatty acid synthase hexA/hexB. The second step is the conversion of NOR to averantin (AVN) and requires the norsolorinic acid ketoreductase nor1, which catalyzes the dehydration of norsolorinic acid to form (1'S)-averantin. The cytochrome P450 monooxygenase avnA then catalyzes the hydroxylation of AVN to 5'hydroxyaverantin (HAVN). The next step is performed by adhA that transforms HAVN to averufin (AVF). Averufin might then be converted to hydroxyversicolorone by cypX and avfA. Hydroxyversicolorone is further converted versiconal hemiacetal acetate (VHA) by moxY. VHA is then the substrate for the versiconal hemiacetal acetate esterase est1 to yield versiconal (VAL). Versicolorin B synthase vbsA then converts VAL to versicolorin B (VERB) by closing the bisfuran ring. Then, the activity of the versicolorin B desaturase verB leads to versicolorin A (VERA). DotB, a predicted chloroperoxidase, may perform epoxidation of the A-ring of VERA. Alternatively, a cytochrome P450, such as cypX or avnA could catalyze this step. It is also possible that another, uncharacterized, cytochrome P450 enzyme is responsible for this step. Opening of the epoxide could potentially be achieved by the epoxide hydrolase epoA. However, epoA seems not to be required for DOTH biosynthesis, but other epoxide hydrolases may have the ability to complement this hydrolysis. Alternatively, opening of the epoxide ring could be achieved non-enzymatically. The next step is the deoxygenation of ring A to yield the 5,8-dihydroxyanthraquinone which is most likely catalyzed by the NADPH dehydrogenase encoded by ver1. The last stages of DOTH biosynthesis are proposed to involve hydroxylation of the bisfuran. OrdB and norB might have oxidative roles here. An alternative possibility is that cytochrome P450 monoogenases such as avnA and cypX might perform these steps in addition to previously proposed steps. The protein is Fatty acid synthase alpha subunit hexA of Dothistroma septosporum (strain NZE10 / CBS 128990) (Red band needle blight fungus).